The following is a 186-amino-acid chain: CASP-like protein 7 (186 aa).

The Cytoplasmic segment spans residues 1 to 26 (MKGGSIEAGEVSKDASPRKGVARGLS). Residues 27 to 47 (IMDFILRIIAAVATLGSALAM) form a helical membrane-spanning segment. The Extracellular segment spans residues 48 to 72 (GTTNETLPFATQFIKFRAEFDDLPS). An N-linked (GlcNAc...) asparagine glycan is attached at asparagine 51. A helical membrane pass occupies residues 73-93 (LVFFVMANAVVCGYLVLSLMI). Residues 94–107 (SVFHILRSTPVKSR) are Cytoplasmic-facing. Residues 108–128 (ILLVALDTVMLSLVTASASAA) traverse the membrane as a helical segment. Over 129–162 (TSIVYIAHNGNTGANWFAICQQYNNFCERISGSL) the chain is Extracellular. A helical membrane pass occupies residues 163-183 (IGSYIAVALFIILIMLSLVAI). Over 184–186 (SRN) the chain is Cytoplasmic.

The protein belongs to the Casparian strip membrane proteins (CASP) family. In terms of assembly, homodimer and heterodimers.

Its subcellular location is the cell membrane. Functionally, regulates membrane-cell wall junctions and localized cell wall deposition. Required for establishment of the Casparian strip membrane domain (CSD) and the subsequent formation of Casparian strips, a cell wall modification of the root endodermis that determines an apoplastic barrier between the intraorganismal apoplasm and the extraorganismal apoplasm and prevents lateral diffusion. The chain is CASP-like protein 7 from Glycine max (Soybean).